The sequence spans 582 residues: MNSTIEQLKHRIAVASKRKPAELVIKNAEVLNVFTGDWKKTDVAIADGYIAGLGNYEGLQTVDATGKKIVPGLINGHIHIESTMLTPREFSKVMLKHGVTTAITDPHEIANVAGTDGLEYMLNASDALPMNIFVNMPSSVPATQFEHNGAQLDAKDISSYFQNPNVLGLAEVMDFPSVANADQKMLEKIVSTIQHGGIIDGHAAGLSKEDLNIYMAAGIRNDHESVSAQEGKDRLEAGMYLMIREGTVAKDLEALLPIINDKNARRCIFVTDDMLLDDLVENGDIDHIIRKAIQLGLDPVMAYQMATLNTAECFGLRELGAVAPGYIADFLILNDENQVDIHQVYKNGKCVVDEGEINQSYFAASLTYDATTLPKPRIQQLKASDFSIDLTDDYCNIIEIVPNKIITNHVCERVEVKEGKFVPSVDKDQLLIAVVERHKGLGYIGKGIVKGFKMKEGAIATSVAHDSHNFVVVGTSEEEMLSAIKKVEQLDGGLVVTKRKQVKAHLALPIGGLMSDKDYLDAYEEVLKLNHVAVENGIPSNFNPFLTLSFLTLPVIPTLKVTDQGLFDFKTFSHINVEVEEK.

This sequence belongs to the metallo-dependent hydrolases superfamily. Adenine deaminase family. The cofactor is Mn(2+).

The catalysed reaction is adenine + H2O + H(+) = hypoxanthine + NH4(+). The protein is Adenine deaminase of Oceanobacillus iheyensis (strain DSM 14371 / CIP 107618 / JCM 11309 / KCTC 3954 / HTE831).